Reading from the N-terminus, the 173-residue chain is Photosystem I assembly protein Ycf3 (173 aa).

TPR repeat units follow at residues 35–68 (AFAYYRDGMSAQADGEYSEALENYEEALRLEDDP), 72–105 (SYILYNMGLIYASNGDHHKALELYHEAIDLNPRM), and 120–153 (GEKAKQSGNEDESEALFDKAAEYWKQAIRIAPNN).

It belongs to the Ycf3 family.

It is found in the cellular thylakoid membrane. In terms of biological role, essential for the assembly of the photosystem I (PSI) complex. May act as a chaperone-like factor to guide the assembly of the PSI subunits. The protein is Photosystem I assembly protein Ycf3 of Picosynechococcus sp. (strain ATCC 27264 / PCC 7002 / PR-6) (Agmenellum quadruplicatum).